Reading from the N-terminus, the 131-residue chain is Small ribosomal subunit protein uS11 (131 aa).

It belongs to the universal ribosomal protein uS11 family. In terms of assembly, part of the 30S ribosomal subunit. Interacts with proteins S7 and S18. Binds to IF-3.

Functionally, located on the platform of the 30S subunit, it bridges several disparate RNA helices of the 16S rRNA. Forms part of the Shine-Dalgarno cleft in the 70S ribosome. This is Small ribosomal subunit protein uS11 from Clostridium acetobutylicum (strain ATCC 824 / DSM 792 / JCM 1419 / IAM 19013 / LMG 5710 / NBRC 13948 / NRRL B-527 / VKM B-1787 / 2291 / W).